A 292-amino-acid chain; its full sequence is Chondroitin proteoglycan 3 (292 aa).

Residues 1-17 (MRFVFIIALLLIGASLA) form the signal peptide. The disordered stretch occupies residues 28–103 (DVSASEDEFS…EGSGDTSPVV (76 aa)). Residues 38 to 80 (GDSSGEISGESSGEASGEASGEASGEASGEASGESSGETSGES) show a composition bias toward low complexity. The segment covering 81 to 96 (SGDEETSGEGSGEEGS) has biased composition (acidic residues). N-linked (GlcNAc...) asparagine glycosylation is found at asparagine 174 and asparagine 254.

The sequence is that of Chondroitin proteoglycan 3 from Caenorhabditis elegans.